The following is a 266-amino-acid chain: Aspartate/glutamate leucyltransferase (266 aa).

Belongs to the R-transferase family. Bpt subfamily.

Its subcellular location is the cytoplasm. It catalyses the reaction N-terminal L-glutamyl-[protein] + L-leucyl-tRNA(Leu) = N-terminal L-leucyl-L-glutamyl-[protein] + tRNA(Leu) + H(+). It carries out the reaction N-terminal L-aspartyl-[protein] + L-leucyl-tRNA(Leu) = N-terminal L-leucyl-L-aspartyl-[protein] + tRNA(Leu) + H(+). Functionally, functions in the N-end rule pathway of protein degradation where it conjugates Leu from its aminoacyl-tRNA to the N-termini of proteins containing an N-terminal aspartate or glutamate. The sequence is that of Aspartate/glutamate leucyltransferase from Rhizorhabdus wittichii (strain DSM 6014 / CCUG 31198 / JCM 15750 / NBRC 105917 / EY 4224 / RW1) (Sphingomonas wittichii).